A 167-amino-acid polypeptide reads, in one-letter code: Ribosome-binding factor A (167 aa).

The interval 122 to 167 (LAASAKHAGEADPYKGDSPEDIDEDDFDEEDTDLSGDNDLDEDANR) is disordered. Residues 128 to 139 (HAGEADPYKGDS) are compositionally biased toward basic and acidic residues. Acidic residues predominate over residues 140–167 (PEDIDEDDFDEEDTDLSGDNDLDEDANR).

This sequence belongs to the RbfA family. Monomer. Binds 30S ribosomal subunits, but not 50S ribosomal subunits or 70S ribosomes.

Its subcellular location is the cytoplasm. One of several proteins that assist in the late maturation steps of the functional core of the 30S ribosomal subunit. Associates with free 30S ribosomal subunits (but not with 30S subunits that are part of 70S ribosomes or polysomes). Required for efficient processing of 16S rRNA. May interact with the 5'-terminal helix region of 16S rRNA. In Paenarthrobacter aurescens (strain TC1), this protein is Ribosome-binding factor A.